Here is a 310-residue protein sequence, read N- to C-terminus: DNA damage-repair/toleration protein DRT102 (310 aa).

Alanine 2 bears the N-acetylalanine mark. The region spanning isoleucine 219 to glutamate 282 is the Cupin type-2 domain.

This Arabidopsis thaliana (Mouse-ear cress) protein is DNA damage-repair/toleration protein DRT102 (DRT102).